The sequence spans 93 residues: Small ribosomal subunit protein uS19 (93 aa).

It belongs to the universal ribosomal protein uS19 family.

Its function is as follows. Protein S19 forms a complex with S13 that binds strongly to the 16S ribosomal RNA. The polypeptide is Small ribosomal subunit protein uS19 (Caldanaerobacter subterraneus subsp. tengcongensis (strain DSM 15242 / JCM 11007 / NBRC 100824 / MB4) (Thermoanaerobacter tengcongensis)).